The primary structure comprises 97 residues: METRKYEITYIIRPDIEESAKSELVARFDKILADNGATVVDSADWDTRRFAYQIGKYTEGTYHIVNVTADSDASLNEFDRLAKFSDDILRHMIVKRG.

The protein belongs to the bacterial ribosomal protein bS6 family.

Functionally, binds together with bS18 to 16S ribosomal RNA. The sequence is that of Small ribosomal subunit protein bS6 from Limosilactobacillus fermentum (strain NBRC 3956 / LMG 18251) (Lactobacillus fermentum).